Consider the following 494-residue polypeptide: Alpha-amylase-related protein (494 aa).

Residues 1-20 (MFKFATAVILCLVAASSTLA) form the signal peptide. Position 21 is a pyrrolidone carboxylic acid (Q21). A disulfide bond links C48 and C104. Ca(2+) is bound by residues N118, Q169, and D178. C157 and C171 are joined by a disulfide. R206 serves as a coordination point for chloride. The active-site Nucleophile is D208. H212 serves as a coordination point for Ca(2+). E245 functions as the Proton donor in the catalytic mechanism. The chloride site is built by N308 and R343. Intrachain disulfides connect C376/C382, C418/C441, and C448/C460.

It belongs to the glycosyl hydrolase 13 family. In terms of assembly, monomer. Requires Ca(2+) as cofactor. Chloride serves as cofactor.

The protein localises to the secreted. The enzyme catalyses Endohydrolysis of (1-&gt;4)-alpha-D-glucosidic linkages in polysaccharides containing three or more (1-&gt;4)-alpha-linked D-glucose units.. The polypeptide is Alpha-amylase-related protein (Amyrel) (Drosophila bipectinata (Fruit fly)).